We begin with the raw amino-acid sequence, 215 residues long: Probable phosphoglycerate mutase GpmB (215 aa).

Substrate is bound by residues 8 to 15, 21 to 22, Arg58, 82 to 85, and 151 to 152; these read RHGETVWN, QG, ELNM, and GM. His9 acts as the Tele-phosphohistidine intermediate in catalysis. Glu82 serves as the catalytic Proton donor/acceptor.

This sequence belongs to the phosphoglycerate mutase family. GpmB subfamily.

It carries out the reaction (2R)-2-phosphoglycerate = (2R)-3-phosphoglycerate. The protein operates within carbohydrate degradation; glycolysis; pyruvate from D-glyceraldehyde 3-phosphate: step 3/5. The polypeptide is Probable phosphoglycerate mutase GpmB (Yersinia enterocolitica serotype O:8 / biotype 1B (strain NCTC 13174 / 8081)).